Reading from the N-terminus, the 1173-residue chain is WASH complex subunit 4 (1173 aa).

Ala2 carries the post-translational modification N-acetylalanine. The residue at position 7 (Ser7) is a Phosphoserine. Residues 27–56 (QLKNYGRFLEEYTSQLRRIEDALDDLIGDV) adopt a coiled-coil conformation. The segment at 705 to 1173 (KDLALFFSLN…STVSADPVVK (469 aa)) is sufficient for interaction with WASHC5. Residues 1141-1155 (AEENQEKKEKEEETK) show a composition bias toward basic and acidic residues. Positions 1141–1173 (AEENQEKKEKEEETKTSNGDGPESTVSADPVVK) are disordered. At Thr1154 the chain carries Phosphothreonine.

Belongs to the SWIP family. Component of the WASH core complex also described as WASH regulatory complex (SHRC) composed of WASH (WASHC1, WASH2P or WASH3P), WASHC2 (WASHC2A or WASHC2C), WASHC3, WASHC4 and WASHC5. The WASH core complex associates via WASHC2 with the F-actin-capping protein dimer (formed by CAPZA1, CAPZA2 or CAPZA3 and CAPZB) in a transient or substoichiometric manner which was initially described as WASH complex.

The protein resides in the early endosome. In terms of biological role, acts as a component of the WASH core complex that functions as a nucleation-promoting factor (NPF) at the surface of endosomes, where it recruits and activates the Arp2/3 complex to induce actin polymerization, playing a key role in the fission of tubules that serve as transport intermediates during endosome sorting. This is WASH complex subunit 4 from Mus musculus (Mouse).